The chain runs to 436 residues: Phosphomethylpyrimidine synthase (436 aa).

Substrate is bound by residues asparagine 69, methionine 98, tyrosine 127, histidine 163, 185–187, 226–229, and glutamate 265; these read SRG and DACR. Histidine 269 is a Zn(2+) binding site. Tyrosine 292 provides a ligand contact to substrate. Histidine 333 contributes to the Zn(2+) binding site. Positions 409, 412, and 416 each coordinate [4Fe-4S] cluster.

This sequence belongs to the ThiC family. [4Fe-4S] cluster is required as a cofactor.

The enzyme catalyses 5-amino-1-(5-phospho-beta-D-ribosyl)imidazole + S-adenosyl-L-methionine = 4-amino-2-methyl-5-(phosphooxymethyl)pyrimidine + CO + 5'-deoxyadenosine + formate + L-methionine + 3 H(+). Its pathway is cofactor biosynthesis; thiamine diphosphate biosynthesis. Its function is as follows. Catalyzes the synthesis of the hydroxymethylpyrimidine phosphate (HMP-P) moiety of thiamine from aminoimidazole ribotide (AIR) in a radical S-adenosyl-L-methionine (SAM)-dependent reaction. The polypeptide is Phosphomethylpyrimidine synthase (Clostridium perfringens (strain SM101 / Type A)).